The following is a 239-amino-acid chain: Ribosomal RNA small subunit methyltransferase G (239 aa).

S-adenosyl-L-methionine contacts are provided by residues Gly-77, Phe-82, 128–129, and Arg-147; that span reads AE. Positions 216 to 239 are disordered; sequence EKKKQTPKKYPRKPGTPNKSPIEG.

The protein belongs to the methyltransferase superfamily. RNA methyltransferase RsmG family.

It localises to the cytoplasm. Its function is as follows. Specifically methylates the N7 position of guanine in position 535 of 16S rRNA. This is Ribosomal RNA small subunit methyltransferase G from Bacillus pumilus (strain SAFR-032).